The sequence spans 365 residues: 3-isopropylmalate dehydrogenase (365 aa).

80–91 (GPKWGTGAVRPE) serves as a coordination point for NAD(+). Substrate contacts are provided by Arg98, Arg108, Arg137, and Asp226. Mg(2+)-binding residues include Asp226, Asp251, and Asp255. 290–301 (GSAPDLPKGKVN) is an NAD(+) binding site.

This sequence belongs to the isocitrate and isopropylmalate dehydrogenases family. In terms of assembly, homodimer. Mg(2+) serves as cofactor. Requires Mn(2+) as cofactor.

The protein resides in the cytoplasm. The catalysed reaction is (2R,3S)-3-isopropylmalate + NAD(+) = 4-methyl-2-oxopentanoate + CO2 + NADH. The protein operates within amino-acid biosynthesis; L-leucine biosynthesis; L-leucine from 3-methyl-2-oxobutanoate: step 3/4. Functionally, catalyzes the oxidation of 3-carboxy-2-hydroxy-4-methylpentanoate (3-isopropylmalate) to 3-carboxy-4-methyl-2-oxopentanoate. The product decarboxylates to 4-methyl-2 oxopentanoate. The chain is 3-isopropylmalate dehydrogenase (LEU2) from Candida glabrata (strain ATCC 2001 / BCRC 20586 / JCM 3761 / NBRC 0622 / NRRL Y-65 / CBS 138) (Yeast).